Consider the following 371-residue polypeptide: MIIGIPKEIKNNENRVSLSPSGVHALVEQGHTVIVEKSAGLGSYFEDVDYTEAGASIVNEQAEVWNVDMVMKVKEPLEEEFQYFKEGLILFTYLHLANEEKLTRALLENKVVGIAYETVQLPDRTLPLLTPMSEVAGRMSAQIGAEFLQKYKGGMGILLGGVPGVSKGRVSIIGGGQAGTNAAKIALGLGADVTILDVNPKRLQELEDLFDGRVHTIMSNPLNIEQCVKDSDLVIGAVLIPGAKAPNLVTEDMVKEMRDGAVIVDIAIDQGGIFETTDRISTHDDPTYKKHGVVHYAVANMPGAVPRTSTIALNNATLPYAQQLASKGYLKALQDNHALSLGLNTINGELTNKGVAEALNLSYTDIESALK.

Substrate is bound by residues Arg15 and Lys74. The Proton donor/acceptor role is filled by His95. Residues Ser133, Gln177 to Ala178, Asp197, Ser219, Val238 to Leu239, Ile266 to Asp269, Arg279, and Val298 to Met301 each bind NAD(+). Residue Asp269 is the Proton donor/acceptor of the active site.

Belongs to the AlaDH/PNT family. In terms of assembly, homohexamer. Trimer of dimer.

The enzyme catalyses L-alanine + NAD(+) + H2O = pyruvate + NH4(+) + NADH + H(+). It functions in the pathway amino-acid degradation; L-alanine degradation via dehydrogenase pathway; NH(3) and pyruvate from L-alanine: step 1/1. In terms of biological role, catalyzes the reversible reductive amination of pyruvate to L-alanine. May play a role in cell wall synthesis as L-alanine is an important constituent of the peptidoglycan layer. The protein is Alanine dehydrogenase (ald) of Staphylococcus saprophyticus subsp. saprophyticus (strain ATCC 15305 / DSM 20229 / NCIMB 8711 / NCTC 7292 / S-41).